A 1497-amino-acid polypeptide reads, in one-letter code: DNA-directed RNA polymerase subunit beta' (1497 aa).

Zn(2+)-binding residues include cysteine 67, cysteine 69, cysteine 82, and cysteine 85. The Mg(2+) site is built by aspartate 499, aspartate 501, and aspartate 503. Zn(2+) contacts are provided by cysteine 867, cysteine 943, cysteine 950, and cysteine 953. Positions glutamate 1476–arginine 1497 are disordered. Positions arginine 1482–arginine 1497 are enriched in basic and acidic residues.

Belongs to the RNA polymerase beta' chain family. The RNAP catalytic core consists of 2 alpha, 1 beta, 1 beta' and 1 omega subunit. When a sigma factor is associated with the core the holoenzyme is formed, which can initiate transcription. Requires Mg(2+) as cofactor. Zn(2+) serves as cofactor.

The catalysed reaction is RNA(n) + a ribonucleoside 5'-triphosphate = RNA(n+1) + diphosphate. In terms of biological role, DNA-dependent RNA polymerase catalyzes the transcription of DNA into RNA using the four ribonucleoside triphosphates as substrates. In Pelodictyon phaeoclathratiforme (strain DSM 5477 / BU-1), this protein is DNA-directed RNA polymerase subunit beta'.